A 324-amino-acid chain; its full sequence is NADH-ubiquinone oxidoreductase chain 1 (324 aa).

9 helical membrane-spanning segments follow: residues L9–I29, P43–I63, F77–L97, L106–G126, I146–F166, T177–A197, L228–F248, Q259–I279, and F299–S319.

Belongs to the complex I subunit 1 family.

It localises to the mitochondrion inner membrane. It catalyses the reaction a ubiquinone + NADH + 5 H(+)(in) = a ubiquinol + NAD(+) + 4 H(+)(out). Functionally, core subunit of the mitochondrial membrane respiratory chain NADH dehydrogenase (Complex I) that is believed to belong to the minimal assembly required for catalysis. Complex I functions in the transfer of electrons from NADH to the respiratory chain. The immediate electron acceptor for the enzyme is believed to be ubiquinone. This is NADH-ubiquinone oxidoreductase chain 1 (MT-ND1) from Scyliorhinus canicula (Small-spotted catshark).